The sequence spans 292 residues: Phosphoenolpyruvate guanylyltransferase (292 aa).

Residues T168, G184, and S187 each coordinate phosphoenolpyruvate. The tract at residues 243–292 (PLVAEDSGGSGGESGTSAESGLSVPPGIVGGTQRRIVSDASGPGRAKKYP) is disordered.

Belongs to the CofC family.

It catalyses the reaction phosphoenolpyruvate + GTP + H(+) = enolpyruvoyl-2-diphospho-5'-guanosine + diphosphate. It functions in the pathway cofactor biosynthesis; coenzyme F420 biosynthesis. Functionally, guanylyltransferase that catalyzes the activation of phosphoenolpyruvate (PEP) as enolpyruvoyl-2-diphospho-5'-guanosine, via the condensation of PEP with GTP. It is involved in the biosynthesis of coenzyme F420, a hydride carrier cofactor. The chain is Phosphoenolpyruvate guanylyltransferase from Frankia casuarinae (strain DSM 45818 / CECT 9043 / HFP020203 / CcI3).